The chain runs to 279 residues: Zinc finger CCCH domain-containing protein 1 (279 aa).

Positions Asp-20 to Gly-45 are disordered. 2 C3H1-type zinc fingers span residues Phe-56 to Glu-84 and Arg-139 to Ala-167.

This is Zinc finger CCCH domain-containing protein 1 from Oryza sativa subsp. japonica (Rice).